The primary structure comprises 121 residues: Chorion class A proteins Ld9 (121 aa).

Belongs to the chorion protein family.

In terms of biological role, this protein is one of many from the eggshell of the gypsy moth. The protein is Chorion class A proteins Ld9 of Lymantria dispar (Gypsy moth).